We begin with the raw amino-acid sequence, 379 residues long: 3-dehydroquinate synthase (379 aa).

NAD(+) is bound by residues Pro-67 to Lys-72, Gly-101 to Asp-105, Thr-125 to Thr-126, Lys-138, and Lys-147. Zn(2+)-binding residues include Glu-180, His-242, and His-258.

The protein belongs to the sugar phosphate cyclases superfamily. Dehydroquinate synthase family. NAD(+) serves as cofactor. Co(2+) is required as a cofactor. Requires Zn(2+) as cofactor.

The protein resides in the cytoplasm. The catalysed reaction is 7-phospho-2-dehydro-3-deoxy-D-arabino-heptonate = 3-dehydroquinate + phosphate. It functions in the pathway metabolic intermediate biosynthesis; chorismate biosynthesis; chorismate from D-erythrose 4-phosphate and phosphoenolpyruvate: step 2/7. Its function is as follows. Catalyzes the conversion of 3-deoxy-D-arabino-heptulosonate 7-phosphate (DAHP) to dehydroquinate (DHQ). In Chlamydia felis (strain Fe/C-56) (Chlamydophila felis), this protein is 3-dehydroquinate synthase.